The following is a 333-amino-acid chain: Elongation factor Ts, mitochondrial (333 aa).

A mitochondrion-targeting transit peptide spans 1–17 (MLRTLRPTLPSRCLRLY).

Belongs to the EF-Ts family.

It is found in the mitochondrion. Associates with the EF-Tu.GDP complex and induces the exchange of GDP to GTP. It remains bound to the aminoacyl-tRNA.EF-Tu.GTP complex up to the GTP hydrolysis stage on the ribosome. The polypeptide is Elongation factor Ts, mitochondrial (Coprinopsis cinerea (strain Okayama-7 / 130 / ATCC MYA-4618 / FGSC 9003) (Inky cap fungus)).